A 197-amino-acid polypeptide reads, in one-letter code: TATA-box-binding protein (197 aa).

A run of 2 repeats spans residues 10–86 (IENI…VKLL) and 101–177 (IQNI…YNQL).

The protein belongs to the TBP family.

General factor that plays a role in the activation of archaeal genes transcribed by RNA polymerase. Binds specifically to the TATA box promoter element which lies close to the position of transcription initiation. The chain is TATA-box-binding protein from Pyrobaculum neutrophilum (strain DSM 2338 / JCM 9278 / NBRC 100436 / V24Sta) (Thermoproteus neutrophilus).